We begin with the raw amino-acid sequence, 487 residues long: Cysteine--tRNA ligase (487 aa).

Cys27 contacts Zn(2+). The 'HIGH' region motif lies at 29–39 (ATVQGLPHVGH). The segment at 174–194 (IDDMQGAPDADPRGKKDPRDF) is disordered. Basic and acidic residues predominate over residues 183–194 (ADPRGKKDPRDF). Zn(2+)-binding residues include Cys225, His250, and Glu254. The 'KMSKS' region signature appears at 281-285 (KMSKS). Residue Lys284 coordinates ATP.

Belongs to the class-I aminoacyl-tRNA synthetase family. Monomer. Zn(2+) is required as a cofactor.

The protein localises to the cytoplasm. The enzyme catalyses tRNA(Cys) + L-cysteine + ATP = L-cysteinyl-tRNA(Cys) + AMP + diphosphate. The chain is Cysteine--tRNA ligase from Arthrobacter sp. (strain FB24).